Here is a 169-residue protein sequence, read N- to C-terminus: Podoplanin (169 aa).

Positions 1 to 22 (MWRVPVLLLVLGGAGLRVPAAG) are cleaved as a signal peptide. The Extracellular segment spans residues 23 to 138 (ASTVRPDDII…EKDGLATVTL (116 aa)). Thr25 carries O-linked (GalNAc...) threonine glycosylation. Residues 37–69 (DSVVTPGTEDSVVTPGAEDNVVTDGATEEPYES) form a disordered region. An O-linked (GalNAc...) serine glycan is attached at Ser38. Residues Thr41 and Thr44 are each glycosylated (O-linked (GalNAc...) threonine). Ser47 carries an O-linked (GalNAc...) serine glycan. Residues Thr50, Thr59, Thr63, Thr72, Thr76, Thr79, Thr83, Thr92, Thr96, Thr106, Thr107, Thr108, Thr113, Thr126, and Thr127 are each glycosylated (O-linked (GalNAc...) threonine). A helical membrane pass occupies residues 139–159 (VGIIVGVLLAIGFIGGIIIVV). A requires for dimerization and lipid rafts association region spans residues 140–144 (GIIVG). The Cytoplasmic portion of the chain corresponds to 160–169 (ARKMSGRYSP). Residues 161–162 (RK) are requires for interaction with MSN and EZR.

It belongs to the podoplanin family. Homodimer. Interacts with CLEC1B; the interaction is independent of CLEC1B glycosylation and activates CLEC1B; the interaction is dependent of sialic acid on O-glycans. Interacts with CD9; this interaction is homophilic and attenuates platelet aggregation and pulmonary metastasis induced by PDPN. Interacts with LGALS8; the interaction is glycosylation-dependent; may participate in connection of the lymphatic endothelium to the surrounding extracellular matrix. Interacts with HSPA9. Interacts (via extracellular domain) with CD44; this interaction is required for PDPN-mediated directional migration and regulation of lamellipodia extension/stabilization during cell spreading and migration. Interacts (via cytoplasmic domain) with MSN and EZR; activates RHOA and promotes epithelial-mesenchymal transition. Interacts with CCL21; relocalized PDPN to the basolateral membrane. Extensively O-glycosylated. Contains sialic acid residues. O-glycosylation is necessary for platelet aggregation activity. Disialylated at Thr-59; sialic acid is critical for platelet-aggregating activity and for CLEC1B interaction. Post-translationally, the N-terminus is blocked.

It localises to the membrane. The protein localises to the cell projection. It is found in the filopodium membrane. The protein resides in the lamellipodium membrane. Its subcellular location is the microvillus membrane. It localises to the ruffle membrane. The protein localises to the membrane raft. It is found in the apical cell membrane. The protein resides in the basolateral cell membrane. Its subcellular location is the invadopodium. Its function is as follows. Mediates effects on cell migration and adhesion through its different partners. During development plays a role in blood and lymphatic vessels separation by binding CLEC1B, triggering CLEC1B activation in platelets and leading to platelet activation and/or aggregation. Interaction with CD9, on the contrary, attenuates platelet aggregation and pulmonary metastasis induced by PDPN. Mediates effects on cell migration and adhesion through its different partners. Through MSN or EZR interaction promotes epithelial-mesenchymal transition (EMT) leading to ERZ phosphorylation and triggering RHOA activation leading to cell migration increase and invasiveness. Interaction with CD44 promotes directional cell migration in epithelial and tumor cells. In lymph nodes (LNs), controls fibroblastic reticular cells (FRCs) adhesion to the extracellular matrix (ECM) and contraction of the actomyosin by maintaining ERM proteins (EZR; MSN and RDX) and MYL9 activation through association with unknown transmembrane proteins. Engagement of CLEC1B by PDPN promotes FRCs relaxation by blocking lateral membrane interactions leading to reduction of ERM proteins (EZR; MSN and RDX) and MYL9 activation. Through binding with LGALS8 may participate in connection of the lymphatic endothelium to the surrounding extracellular matrix. In keratinocytes, induces changes in cell morphology showing an elongated shape, numerous membrane protrusions, major reorganization of the actin cytoskeleton, increased motility and decreased cell adhesion. Controls invadopodia stability and maturation leading to efficient degradation of the extracellular matrix (ECM) in tumor cells through modulation of RHOC activity in order to activate ROCK1/ROCK2 and LIMK1/LIMK2 and inactivation of CFL1. Required for normal lung cell proliferation and alveolus formation at birth. Does not function as a water channel or as a regulator of aquaporin-type water channels. Does not have any effect on folic acid or amino acid transport. The chain is Podoplanin (PDPN) from Canis lupus familiaris (Dog).